A 226-amino-acid chain; its full sequence is UPF0502 protein azo0627 (226 aa).

It belongs to the UPF0502 family.

The polypeptide is UPF0502 protein azo0627 (Azoarcus sp. (strain BH72)).